A 503-amino-acid polypeptide reads, in one-letter code: Maturase K (503 aa).

Belongs to the intron maturase 2 family. MatK subfamily.

It localises to the plastid. It is found in the chloroplast. Usually encoded in the trnK tRNA gene intron. Probably assists in splicing its own and other chloroplast group II introns. In Rubus ursinus (California blackberry), this protein is Maturase K.